Reading from the N-terminus, the 226-residue chain is ATP synthase subunit a (226 aa).

The next 5 helical transmembrane spans lie at 18–38, 74–94, 100–120, 162–182, and 187–207; these read LSLN…TYWL, FVSL…PYIF, LTLT…YGWI, LTAN…TGPM, and IILS…SAVA.

It belongs to the ATPase A chain family. F-type ATPases have 2 components, CF(1) - the catalytic core - and CF(0) - the membrane proton channel. CF(1) has five subunits: alpha(3), beta(3), gamma(1), delta(1), epsilon(1). CF(0) has three main subunits: a, b and c.

Its subcellular location is the mitochondrion inner membrane. Functionally, mitochondrial membrane ATP synthase (F(1)F(0) ATP synthase or Complex V) produces ATP from ADP in the presence of a proton gradient across the membrane which is generated by electron transport complexes of the respiratory chain. F-type ATPases consist of two structural domains, F(1) - containing the extramembraneous catalytic core and F(0) - containing the membrane proton channel, linked together by a central stalk and a peripheral stalk. During catalysis, ATP synthesis in the catalytic domain of F(1) is coupled via a rotary mechanism of the central stalk subunits to proton translocation. Key component of the proton channel; it may play a direct role in the translocation of protons across the membrane. This is ATP synthase subunit a from Aedes aegypti (Yellowfever mosquito).